A 202-amino-acid chain; its full sequence is MEAEAGGLEELTDEEMAALGKEELVRRLRREEAARLAALVQRGRLMQEVNRQLQGHLGEIRELKQLNRRLQAENRELRDLCCFLDSERQRGRRAARQWQLFGTQASRAVREDLGGCWQKLAELEGRQEELLRENLALKELCLALGEEWGPRGGPSGAGGSGAGPAPELALPPCGPRDLGDGSSSTGSVGSPDQLPLACSPDD.

N-acetylmethionine is present on Met1. Coiled coils occupy residues 43–90 (GRLM…ERQR) and 118–147 (QKLA…LGEE). Positions 148 to 202 (WGPRGGPSGAGGSGAGPAPELALPPCGPRDLGDGSSSTGSVGSPDQLPLACSPDD) are disordered. Over residues 150–162 (PRGGPSGAGGSGA) the composition is skewed to gly residues. Residues 180–190 (DGSSSTGSVGS) are compositionally biased toward low complexity.

It belongs to the CCDC85 family. Interacts with CEBPB. Interacts with EURL. May interact with CEBPD. Interacts with MCRS1. Interacts with TCF7L2; competes with CTNNB1. Interacts with ANKRD26. Interacts with the beta-catenin family proteins ARVCF, CTNND1, CTNND2 and PKP4. In terms of assembly, (Microbial infection) Interacts with the viral phosphoprotein hepatitis delta antigen (HDAG); this interaction affects hepatitis delta virus (HDV) genomic replication in intact cells. Widely expressed including liver.

It is found in the nucleus. Its subcellular location is the cytoplasm. The protein localises to the cytoskeleton. The protein resides in the microtubule organizing center. It localises to the centrosome. It is found in the cell junction. Its subcellular location is the adherens junction. Functions as a transcriptional repressor. May inhibit the activity of CTNNB1 in a TP53-dependent manner and thus regulate cell growth. May function in adipocyte differentiation, negatively regulating mitotic clonal expansion. Plays a role in cell-cell adhesion and epithelium development through its interaction with proteins of the beta-catenin family. In terms of biological role, (Microbial infection) Plays a role in hepatitis delta virus (HDV) genomic replication. The polypeptide is Coiled-coil domain-containing protein 85B (CCDC85B) (Homo sapiens (Human)).